Reading from the N-terminus, the 497-residue chain is Probable malate:quinone oxidoreductase (497 aa).

This sequence belongs to the MQO family. Requires FAD as cofactor.

It carries out the reaction (S)-malate + a quinone = a quinol + oxaloacetate. It participates in carbohydrate metabolism; tricarboxylic acid cycle; oxaloacetate from (S)-malate (quinone route): step 1/1. This Wolinella succinogenes (strain ATCC 29543 / DSM 1740 / CCUG 13145 / JCM 31913 / LMG 7466 / NCTC 11488 / FDC 602W) (Vibrio succinogenes) protein is Probable malate:quinone oxidoreductase.